Consider the following 246-residue polypeptide: tRNA pseudouridine synthase A (246 aa).

D52 (nucleophile) is an active-site residue. A substrate-binding site is contributed by Y111.

The protein belongs to the tRNA pseudouridine synthase TruA family. Homodimer.

The catalysed reaction is uridine(38/39/40) in tRNA = pseudouridine(38/39/40) in tRNA. Its function is as follows. Formation of pseudouridine at positions 38, 39 and 40 in the anticodon stem and loop of transfer RNAs. The sequence is that of tRNA pseudouridine synthase A from Borreliella burgdorferi (strain ATCC 35210 / DSM 4680 / CIP 102532 / B31) (Borrelia burgdorferi).